Here is a 1842-residue protein sequence, read N- to C-terminus: Fatty acid synthase subunit alpha (1842 aa).

The segment at 101-141 (PAEAPASTSSTPKVETAAAAAPAATPAPAPAQTSAPAAALP) is disordered. The segment covering 116 to 139 (TAAAAAPAATPAPAPAQTSAPAAA) has biased composition (low complexity). The region spanning 145–220 (PKALEVLHTL…AIMQSSFNGS (76 aa)) is the Carrier domain. S180 carries the post-translational modification O-(pantetheine 4'-phosphoryl)serine. S604 carries the phosphoserine modification. Residues 1079–1616 (LQEVVIDHDL…QVGGQVIVIH (538 aa)) enclose the Ketosynthase family 3 (KS3) domain. Residue C1262 is the For beta-ketoacyl synthase activity of the active site. The tract at residues 1304-1332 (GATSNAAKETERGRTPQEMSRPATSTRDG) is disordered. At S1412 the chain carries Phosphoserine. Residues H1501 and H1542 each act as for beta-ketoacyl synthase activity in the active site. Mg(2+) is bound by residues D1728, V1729, and E1730. Acetyl-CoA is bound by residues 1728 to 1730 (DVE), Y1754, S1764, 1773 to 1783 (EAVFKSLGISG), 1797 to 1800 (SSES), and 1827 to 1829 (ISH). S1828 and H1829 together coordinate Mg(2+).

This sequence belongs to the thiolase-like superfamily. Fungal fatty acid synthetase subunit alpha family. [Alpha(6)beta(6)] hexamers of two multifunctional subunits (alpha and beta).

It carries out the reaction acetyl-CoA + n malonyl-CoA + 2n NADPH + 4n H(+) = a long-chain-acyl-CoA + n CoA + n CO2 + 2n NADP(+).. The enzyme catalyses a fatty acyl-[ACP] + malonyl-[ACP] + H(+) = a 3-oxoacyl-[ACP] + holo-[ACP] + CO2. It catalyses the reaction a (3R)-hydroxyacyl-[ACP] + NADP(+) = a 3-oxoacyl-[ACP] + NADPH + H(+). Functionally, fatty acid synthetase catalyzes the formation of long-chain fatty acids from acetyl-CoA, malonyl-CoA and NADPH. The alpha subunit contains domains for: acyl carrier protein, 3-oxoacyl-[acyl-carrier-protein] reductase, and 3-oxoacyl-[acyl-carrier-protein] synthase. This subunit coordinates the binding of the six beta subunits to the enzyme complex. The polypeptide is Fatty acid synthase subunit alpha (fas2) (Schizosaccharomyces pombe (strain 972 / ATCC 24843) (Fission yeast)).